Consider the following 873-residue polypeptide: Potassium voltage-gated channel subfamily KQT member 3 (873 aa).

A disordered region spans residues 1–41 (MGLKARRAAGAAGGGGGEGGGGGGGAANPAGGDSAVAGDEE). The Cytoplasmic segment spans residues 1–121 (MGLKARRAAG…IYDALERPRG (121 aa)). The span at 11-26 (AAGGGGGEGGGGGGGA) shows a compositional bias: gly residues. Threonine 82 bears the Phosphothreonine mark. Residues 122-144 (WALLYHALVFLIVLGCLILAVLT) form a helical membrane-spanning segment. Residues 145–154 (TFKEYETVSG) are Extracellular-facing. Residues 155–176 (DWLLLLETFAIFIFGAEFALRI) form a helical membrane-spanning segment. Residues 177-194 (WAAGCCCRYKGWRGRLKF) lie on the Cytoplasmic side of the membrane. The helical transmembrane segment at 195–214 (ARKPLCMLDIFVLIASVPVV) threads the bilayer. At 215–226 (AVGNQGNVLATS) the chain is on the extracellular side. Residues 227–245 (LRSLRFLQILRMLRMDRRG) traverse the membrane as a helical; Voltage-sensor segment. Arginine 244 lines the a 1,2-diacyl-sn-glycero-3-phospho-(1D-myo-inositol-4,5-bisphosphate) pocket. Residues 246 to 257 (GTWKLLGSAICA) lie on the Cytoplasmic side of the membrane. The helical transmembrane segment at 258 to 283 (HSKELITAWYIGFLTLILSSFLVYLV) threads the bilayer. Lysine 260 is a binding site for a 1,2-diacyl-sn-glycero-3-phospho-(1D-myo-inositol-4,5-bisphosphate). Topologically, residues 284 to 303 (EKDVPEMDAQGEEMKEEFET) are extracellular. Positions 304 to 316 (YADALWWGLITLA) form an intramembrane region, pore-forming. The Selectivity filter motif lies at 317 to 322 (TIGYGD). The Extracellular segment spans residues 317 to 327 (TIGYGDKTPKT). A helical transmembrane segment spans residues 328 to 354 (WEGRLIAATFSLIGVSFFALPAGILGS). Residues 355–873 (GLALKVQEQH…SIWTPSNKPT (519 aa)) lie on the Cytoplasmic side of the membrane. Residues 357–538 (ALKVQEQHRQ…RLYKKKFKET (182 aa)) form a mediates interaction with calmodulin region. Position 367 (lysine 367) interacts with a 1,2-diacyl-sn-glycero-3-phospho-(1D-myo-inositol-4,5-bisphosphate). Disordered regions lie at residues 575-603 (PGPP…PRNE), 723-742 (RGGP…GSTY), and 766-873 (ELQG…NKPT). 3 stretches are compositionally biased toward polar residues: residues 588 to 601 (KGSA…QSPR), 725 to 741 (GPSS…SGST), and 844 to 873 (DPFT…NKPT).

It belongs to the potassium channel family. KQT (TC 1.A.1.15) subfamily. Kv7.3/KCNQ3 sub-subfamily. In terms of assembly, heterotetramer with KCNQ2; forms heterotetrameric native M-channel responsible for the M-current. Interacts with calmodulin; the interaction is calcium-independent, constitutive and participates in the proper assembly of a functional M-channel. Heteromultimer with KCNQ5. May associate with KCNE2. Interacts with IQCJ-SCHIP1. Interacts (via the pore module) with SLC5A3/SMIT1; forms a coregulatory complex that alters ion selectivity, voltage dependence and gating kinetics of the channel. KCNQ2/KCNQ3 are ubiquitinated by NEDD4L. Ubiquitination leads to protein degradation. Degradation induced by NEDD4L is inhibited by USP36. In terms of tissue distribution, expressed in dorsal root ganglion (DRG) neurons.

The protein localises to the cell membrane. The catalysed reaction is K(+)(in) = K(+)(out). It carries out the reaction Rb(+)(in) = Rb(+)(out). It catalyses the reaction Cs(+)(in) = Cs(+)(out). The enzyme catalyses Na(+)(in) = Na(+)(out). With respect to regulation, phosphatidylinositol-4,5-bisphosphate (PIP2) potentiates the activation of KCNQ channels by enhancing the electro-mechanical coupling of the voltage-sensing domain (VSD) and the pore-forming domain (PD). In the closed state of the channel, PIP2 is anchored at the S2-S3 loop; upon channel activation, PIP2 interacts with the S4-S5 linker and is involved in channel gating. Calcium suppresses KCNQ2-KCNQ3 channel currents, with calcium-bound calmodulin inducing a change in channel configuration which leads to the reduction of channel affinity for PIP2 and subsequent current suppression. Pore-forming subunit of the voltage-gated potassium (Kv) M-channel which is responsible for the M-current, a key controller of neuronal excitability. M-channel is composed of pore-forming subunits KCNQ2 and KCNQ3 assembled as heterotetramers. The native M-current has a slowly activating and deactivating potassium conductance which plays a critical role in determining the subthreshold electrical excitability of neurons as well as the responsiveness to synaptic inputs. M-channel is selectively permeable in vitro to other cations besides potassium, in decreasing order of affinity K(+) &gt; Rb(+) &gt; Cs(+) &gt; Na(+). M-channel association with SLC5A3/SMIT1 alters channel ion selectivity, increasing Na(+) and Cs(+) permeation relative to K(+). Suppressed by activation of M1 muscarinic acetylcholine receptors. KCNQ3 also associates with KCNQ5 to form a functional channel in vitro and may also contribute to the M-current in brain. This Mus musculus (Mouse) protein is Potassium voltage-gated channel subfamily KQT member 3.